Here is a 206-residue protein sequence, read N- to C-terminus: Large ribosomal subunit protein uL4 (206 aa).

The disordered stretch occupies residues 55-80; the sequence is AFVSGGGAKPWRQKGTGRARSGSNRS.

This sequence belongs to the universal ribosomal protein uL4 family. In terms of assembly, part of the 50S ribosomal subunit.

Its function is as follows. One of the primary rRNA binding proteins, this protein initially binds near the 5'-end of the 23S rRNA. It is important during the early stages of 50S assembly. It makes multiple contacts with different domains of the 23S rRNA in the assembled 50S subunit and ribosome. In terms of biological role, forms part of the polypeptide exit tunnel. The sequence is that of Large ribosomal subunit protein uL4 from Nitratidesulfovibrio vulgaris (strain DSM 19637 / Miyazaki F) (Desulfovibrio vulgaris).